The following is a 154-amino-acid chain: Ribosome maturation factor RimP (154 aa).

The protein belongs to the RimP family.

Its subcellular location is the cytoplasm. In terms of biological role, required for maturation of 30S ribosomal subunits. The polypeptide is Ribosome maturation factor RimP (Ruthia magnifica subsp. Calyptogena magnifica).